Reading from the N-terminus, the 106-residue chain is ATP-dependent Clp protease adapter protein ClpS (106 aa).

The protein belongs to the ClpS family. Binds to the N-terminal domain of the chaperone ClpA.

Involved in the modulation of the specificity of the ClpAP-mediated ATP-dependent protein degradation. The polypeptide is ATP-dependent Clp protease adapter protein ClpS (Escherichia coli O127:H6 (strain E2348/69 / EPEC)).